We begin with the raw amino-acid sequence, 174 residues long: Anthrone oxygenase CPUR_05435 (174 aa).

The next 4 helical transmembrane spans lie at 13–33, 56–76, 88–108, and 140–160; these read VALA…AIMI, YGSV…GFAS, CLAA…AMIP, and WVVL…MGFT.

The protein belongs to the anthrone oxygenase family.

It localises to the membrane. It carries out the reaction emodin anthrone + O2 = emodin + H2O + H(+). Anthrone oxygenase; part of the ergochrome gene cluster responsible for the typical purple-black color of the ergot sclerotia. The ergochrome gene cluster produces several ergot pigments including the yellow ergochrome secalonic acid and its derivatives, as well as the red anthraquinones endocrocin and clavorubin. The pathway begins with the synthesis of atrochrysone thioester by the polyketide synthase (PKS) CPUR_05437. The atrochrysone carboxyl ACP thioesterase CPUR_05436 then breaks the thioester bond and releases the atrochrysone carboxylic acid from CPUR_05437. The decarboxylase CPUR_05434 then catalyzes the concerted decarboxylation-elimination required to convert atochrysone carboxylic acid into emodin anthrone, which is further oxidized to emodin by the anthrone oxygenase CPUR_05435. Emodin is further modified to yield monodictyphenone via several steps involving CPUR_05427, CPUR_05428, CPUR_05429 and CPUR_05430. The short chain dehydrogenase/reductase CPUR_05418 then catalyzes the C-5 ketoreduction to give the xanthone skeleton of the monomeric units. Ergochromes formation requires further dimerization steps of different xanthone units, probably catalyzed by the cytochrome P450 monooxygenase CPUR_05419. CPUR_05425, CPUR_05426 and CPUR_05431 are unique to Claviceps, thus it is likely that they are involved in further modification of xanthone units or in their dimerization. The yellow ergochromes and the red anthraquinone pigments endocrocin and clavorubin are products from the same PKS derived precursors and the latter are likely shunt products in the pathway of xanthone biosynthesis. It is proposed that atrochrysone carboxylic acid released from the PKS CPUR_05437 can also be converted to endocrocin anthrone which is further oxidized into endocrocin by CPUR_05435. Endocrocin could be then modified to clavorubin, possibly by CPUR_05423 and CPUR_05431. Clavorubin is the principal anthraquinone metabolite produced by the cluster with a much higher yield compared to endocrocin. The sequence is that of Anthrone oxygenase CPUR_05435 from Claviceps purpurea (strain 20.1) (Ergot fungus).